Reading from the N-terminus, the 600-residue chain is Aspartate--tRNA(Asp/Asn) ligase (600 aa).

Residue E176 coordinates L-aspartate. The interval 200 to 203 (QQFK) is aspartate. 2 residues coordinate L-aspartate: R222 and H452. 222-224 (RDE) contacts ATP. ATP is bound at residue E490. Position 497 (R497) interacts with L-aspartate. Residue 542-545 (GIDR) participates in ATP binding.

This sequence belongs to the class-II aminoacyl-tRNA synthetase family. Type 1 subfamily. Homodimer.

The protein resides in the cytoplasm. The catalysed reaction is tRNA(Asx) + L-aspartate + ATP = L-aspartyl-tRNA(Asx) + AMP + diphosphate. In terms of biological role, aspartyl-tRNA synthetase with relaxed tRNA specificity since it is able to aspartylate not only its cognate tRNA(Asp) but also tRNA(Asn). Reaction proceeds in two steps: L-aspartate is first activated by ATP to form Asp-AMP and then transferred to the acceptor end of tRNA(Asp/Asn). This chain is Aspartate--tRNA(Asp/Asn) ligase, found in Rickettsia felis (strain ATCC VR-1525 / URRWXCal2) (Rickettsia azadi).